The sequence spans 1157 residues: ATP-dependent helicase/deoxyribonuclease subunit B (1157 aa).

One can recognise a UvrD-like helicase ATP-binding domain in the interval 1–299 (MSIRFIIGRA…SHLEKYFFVR (299 aa)). 8-15 (GRAGAGKT) contacts ATP. The UvrD-like helicase C-terminal domain occupies 279-590 (GNTARFKSPA…LVASLERSRN (312 aa)). Residues Cys792, Cys1112, Cys1115, and Cys1121 each coordinate [4Fe-4S] cluster.

This sequence belongs to the helicase family. AddB/RexB type 1 subfamily. Heterodimer of AddA and AddB. It depends on Mg(2+) as a cofactor. The cofactor is [4Fe-4S] cluster.

Functionally, the heterodimer acts as both an ATP-dependent DNA helicase and an ATP-dependent, dual-direction single-stranded exonuclease. Recognizes the chi site generating a DNA molecule suitable for the initiation of homologous recombination. The AddB subunit has 5' -&gt; 3' nuclease activity but not helicase activity. This chain is ATP-dependent helicase/deoxyribonuclease subunit B, found in Pelotomaculum thermopropionicum (strain DSM 13744 / JCM 10971 / SI).